We begin with the raw amino-acid sequence, 152 residues long: Small ribosomal subunit protein uS5 (152 aa).

Positions 14–77 (FEEVIVNIGR…DDAHKNLVKV (64 aa)) constitute an S5 DRBM domain.

The protein belongs to the universal ribosomal protein uS5 family. Part of the 30S ribosomal subunit. Contacts proteins S4 and S8.

In terms of biological role, with S4 and S12 plays an important role in translational accuracy. Functionally, located at the back of the 30S subunit body where it stabilizes the conformation of the head with respect to the body. This Sulfurovum sp. (strain NBC37-1) protein is Small ribosomal subunit protein uS5.